A 449-amino-acid polypeptide reads, in one-letter code: Adenylosuccinate synthetase isozyme 1 B (449 aa).

Residues 34-40 (GDEGKGK) and 62-64 (GHT) contribute to the GTP site. Catalysis depends on D35, which acts as the Proton acceptor. Residues D35 and G62 each contribute to the Mg(2+) site. D35 contacts substrate. IMP-binding positions include 35–38 (DEGK), 60–63 (NAGH), T155, R169, N248, T263, and R327. The active-site Proton donor is the H63. Residue 323–329 (VTTGRKR) coordinates substrate. Residues R329, 355–357 (KLD), and 437–440 (GVGK) each bind GTP.

This sequence belongs to the adenylosuccinate synthetase family. In terms of assembly, homodimer. Mg(2+) is required as a cofactor.

Its subcellular location is the cytoplasm. It catalyses the reaction IMP + L-aspartate + GTP = N(6)-(1,2-dicarboxyethyl)-AMP + GDP + phosphate + 2 H(+). It functions in the pathway purine metabolism; AMP biosynthesis via de novo pathway; AMP from IMP: step 1/2. In terms of biological role, component of the purine nucleotide cycle (PNC), which interconverts IMP and AMP to regulate the nucleotide levels in various tissues, and which contributes to glycolysis and ammoniagenesis. Catalyzes the first committed step in the biosynthesis of AMP from IMP. The polypeptide is Adenylosuccinate synthetase isozyme 1 B (adss1b) (Salmo salar (Atlantic salmon)).